The primary structure comprises 355 residues: 3-isopropylmalate dehydrogenase (355 aa).

Substrate-binding residues include Arg90, Arg100, Arg128, and Asp222. Residues Asp222, Asp246, and Asp250 each coordinate Mg(2+). 280–292 (GSAPDIAGKGIAN) is a binding site for NAD(+).

It belongs to the isocitrate and isopropylmalate dehydrogenases family. LeuB type 1 subfamily. In terms of assembly, homodimer. Mg(2+) serves as cofactor. Requires Mn(2+) as cofactor.

Its subcellular location is the cytoplasm. It catalyses the reaction (2R,3S)-3-isopropylmalate + NAD(+) = 4-methyl-2-oxopentanoate + CO2 + NADH. Its pathway is amino-acid biosynthesis; L-leucine biosynthesis; L-leucine from 3-methyl-2-oxobutanoate: step 3/4. Functionally, catalyzes the oxidation of 3-carboxy-2-hydroxy-4-methylpentanoate (3-isopropylmalate) to 3-carboxy-4-methyl-2-oxopentanoate. The product decarboxylates to 4-methyl-2 oxopentanoate. The sequence is that of 3-isopropylmalate dehydrogenase from Burkholderia thailandensis (strain ATCC 700388 / DSM 13276 / CCUG 48851 / CIP 106301 / E264).